The primary structure comprises 431 residues: Glutamyl-tRNA reductase (431 aa).

Substrate contacts are provided by residues 49–52, S109, 114–116, and Q120; these read TCNR and EGQ. The active-site Nucleophile is the C50. 189 to 194 serves as a coordination point for NADP(+); the sequence is GAGKMS.

Belongs to the glutamyl-tRNA reductase family. As to quaternary structure, homodimer.

It catalyses the reaction (S)-4-amino-5-oxopentanoate + tRNA(Glu) + NADP(+) = L-glutamyl-tRNA(Glu) + NADPH + H(+). Its pathway is porphyrin-containing compound metabolism; protoporphyrin-IX biosynthesis; 5-aminolevulinate from L-glutamyl-tRNA(Glu): step 1/2. The protein operates within porphyrin-containing compound metabolism; chlorophyll biosynthesis. Catalyzes the NADPH-dependent reduction of glutamyl-tRNA(Glu) to glutamate 1-semialdehyde (GSA). This chain is Glutamyl-tRNA reductase, found in Trichodesmium erythraeum (strain IMS101).